Consider the following 307-residue polypeptide: Replicase polyprotein 1ab (307 aa).

Residues 1–76 (FNKFGKARLY…HQKCLKSIAA (76 aa)) are rdRp Fingers N-ter. The Nsp12 RNA-dependent RNA polymerase domain occupies 1–307 (FNKFGKARLY…TDIEKGPHEF (307 aa)). Positions 77-115 (TRGVPVVIGTTKFYGGWDDMLRRLIKDVDSPVLMGWDYP) are rdRp Palm N-ter. The region spanning 107 to 269 (PVLMGWDYPK…CYNSEFASKG (163 aa)) is the RdRp catalytic domain. The rdRp Fingers C-ter stretch occupies residues 116–174 (KCDRAMPNILRIVSSLVLARKHDSCCSHTDRFYRLANECAQVLSEIVMCGGCYYVKPGG). A rdRp Palm C-ter region spans residues 175-307 (TSSGDATTAF…TDIEKGPHEF (133 aa)). Active-site residues include S254, D255, and D256. F307 is a region of interest (rdRp Thumb).

Belongs to the coronaviruses polyprotein 1ab family.

The enzyme catalyses RNA(n) + a ribonucleoside 5'-triphosphate = RNA(n+1) + diphosphate. Functionally, the replicase polyprotein of coronaviruses is a multifunctional protein: it contains the activities necessary for the transcription of negative stranded RNA, leader RNA, subgenomic mRNAs and progeny virion RNA as well as proteinases responsible for the cleavage of the polyprotein into functional products. Non-structural protein 1: binds to the 40S ribosomal subunit and inhibits host translation. The nsp1-40S ribosome complex further induces an endonucleolytic cleavage near the 5'UTR of host mRNAs, targeting them for degradation. By suppressing host gene expression, nsp1 facilitates efficient viral gene expression in infected cells and evasion from host immune response. This chain is Replicase polyprotein 1ab (rep), found in Rattus norvegicus (Rat).